The sequence spans 503 residues: 3-octaprenyl-4-hydroxybenzoate carboxy-lyase (503 aa).

Residue asparagine 176 coordinates Mn(2+). Residues 179-181 (IYR), 193-195 (RWL), and 198-199 (RG) each bind prenylated FMN. Glutamate 242 serves as a coordination point for Mn(2+). Aspartate 303 (proton donor) is an active-site residue.

This sequence belongs to the UbiD family. Homohexamer. Prenylated FMN serves as cofactor. Requires Mn(2+) as cofactor.

The protein localises to the cell membrane. The catalysed reaction is a 4-hydroxy-3-(all-trans-polyprenyl)benzoate + H(+) = a 2-(all-trans-polyprenyl)phenol + CO2. It functions in the pathway cofactor biosynthesis; ubiquinone biosynthesis. Catalyzes the decarboxylation of 3-octaprenyl-4-hydroxy benzoate to 2-octaprenylphenol, an intermediate step in ubiquinone biosynthesis. This Ralstonia pickettii (strain 12J) protein is 3-octaprenyl-4-hydroxybenzoate carboxy-lyase.